The sequence spans 95 residues: Selenoprotein K (95 aa).

A helical transmembrane segment spans residues 20-42; that stretch reads LSFLTDMFWGITDFIVMFFQSII. The disordered stretch occupies residues 48–95; the sequence is RRGCQNSSSRTRFDDGRGPPGNPRRRMGRIDHNSGPNAPPMSGGGUGR. Sec-93 is a non-standard amino acid (selenocysteine).

It belongs to the selenoprotein K family.

It is found in the endoplasmic reticulum membrane. It localises to the cell membrane. Its function is as follows. Required for Ca(2+) flux in immune cells and plays a role in T-cell proliferation and in T-cell and neutrophil migration. Involved in endoplasmic reticulum-associated degradation (ERAD) of soluble glycosylated proteins. Required for cell surface expression of CD36 and involved in macrophage uptake of low-density lipoprotein and in foam cell formation. Required for palmitoylation. The polypeptide is Selenoprotein K (selenok) (Xenopus tropicalis (Western clawed frog)).